A 194-amino-acid chain; its full sequence is Outer-membrane lipoprotein LolB (194 aa).

Residues 1–18 form the signal peptide; that stretch reads MKLLQHLTLIFCLLILTA. A lipid anchor (N-palmitoyl cysteine) is attached at cysteine 19. The S-diacylglycerol cysteine moiety is linked to residue cysteine 19.

The protein belongs to the LolB family. In terms of assembly, monomer.

It is found in the cell outer membrane. Its function is as follows. Plays a critical role in the incorporation of lipoproteins in the outer membrane after they are released by the LolA protein. In Tolumonas auensis (strain DSM 9187 / NBRC 110442 / TA 4), this protein is Outer-membrane lipoprotein LolB.